The sequence spans 489 residues: Arginine biosynthesis bifunctional protein ArgJ 2, mitochondrial (489 aa).

A mitochondrion-targeting transit peptide spans 1-11; that stretch reads MLLISRIGARH. Positions 205, 234, 245, 341, and 484 each coordinate substrate. T245 acts as the Nucleophile in catalysis.

It belongs to the ArgJ family. In terms of assembly, heterodimer of an alpha and a beta chain. Post-translationally, the alpha and beta chains are autoproteolytically processed from a single precursor protein within the mitochondrion.

It is found in the mitochondrion matrix. It carries out the reaction N(2)-acetyl-L-ornithine + L-glutamate = N-acetyl-L-glutamate + L-ornithine. The enzyme catalyses L-glutamate + acetyl-CoA = N-acetyl-L-glutamate + CoA + H(+). It functions in the pathway amino-acid biosynthesis; L-arginine biosynthesis; L-ornithine and N-acetyl-L-glutamate from L-glutamate and N(2)-acetyl-L-ornithine (cyclic): step 1/1. The protein operates within amino-acid biosynthesis; L-arginine biosynthesis; N(2)-acetyl-L-ornithine from L-glutamate: step 1/4. Functionally, catalyzes two activities which are involved in the cyclic version of arginine biosynthesis: the synthesis of acetylglutamate from glutamate and acetyl-CoA, and of ornithine by transacetylation between acetylornithine and glutamate. This Sclerotinia sclerotiorum (strain ATCC 18683 / 1980 / Ss-1) (White mold) protein is Arginine biosynthesis bifunctional protein ArgJ 2, mitochondrial.